The following is a 488-amino-acid chain: Ribulose bisphosphate carboxylase large chain (488 aa).

Positions 128 and 178 each coordinate substrate. Residue lysine 180 is the Proton acceptor of the active site. Residue lysine 182 participates in substrate binding. Mg(2+) is bound by residues lysine 206, aspartate 208, and glutamate 209. Lysine 206 is modified (N6-carboxylysine). Histidine 298 acts as the Proton acceptor in catalysis. Residues arginine 299, histidine 331, and serine 383 each contribute to the substrate site.

This sequence belongs to the RuBisCO large chain family. Type I subfamily. In terms of assembly, heterohexadecamer of 8 large chains and 8 small chains. Requires Mg(2+) as cofactor.

The catalysed reaction is 2 (2R)-3-phosphoglycerate + 2 H(+) = D-ribulose 1,5-bisphosphate + CO2 + H2O. It carries out the reaction D-ribulose 1,5-bisphosphate + O2 = 2-phosphoglycolate + (2R)-3-phosphoglycerate + 2 H(+). In terms of biological role, ruBisCO catalyzes two reactions: the carboxylation of D-ribulose 1,5-bisphosphate, the primary event in carbon dioxide fixation, as well as the oxidative fragmentation of the pentose substrate. Both reactions occur simultaneously and in competition at the same active site. This chain is Ribulose bisphosphate carboxylase large chain, found in Xanthobacter flavus.